Reading from the N-terminus, the 97-residue chain is Coiled-coil domain-containing protein 167 (97 aa).

A coiled-coil region spans residues 10 to 79; sequence GVALEIDGLE…LRQENRKNML (70 aa). A helical transmembrane segment spans residues 77–97; it reads NMLLSVAIFLLLTVIYAYWAL.

Its subcellular location is the membrane. This is Coiled-coil domain-containing protein 167 (CCDC167) from Bos taurus (Bovine).